We begin with the raw amino-acid sequence, 351 residues long: Fruit bromelain (351 aa).

A signal peptide spans 1-24 (MASKVQLVFLFLFLCAMWASPSAA). Positions 25–121 (SRDEPNDPMM…VVSFDDVNIS (97 aa)) are cleaved as a propeptide — activation peptide. N-linked (GlcNAc...) asparagine glycosylation occurs at N119. 3 cysteine pairs are disulfide-bonded: C144–C184, C178–C217, and C273–C325. The active site involves C147. Active-site residues include H279 and N300.

It belongs to the peptidase C1 family.

The catalysed reaction is Hydrolysis of proteins with broad specificity for peptide bonds. Bz-Phe-Val-Arg-|-NHMec is a good synthetic substrate, but there is no action on Z-Arg-Arg-|-NHMec (cf. stem bromelain).. Its function is as follows. Cysteine proteinase with a high level of diversity in substrate specificity. This Ananas comosus (Pineapple) protein is Fruit bromelain.